The following is a 293-amino-acid chain: F-box only protein 6 (293 aa).

An F-box domain is found at 10 to 57; sequence LDSINELPENILLELFTHVPARQLLLNCRLVCSLWRDLIDLMTLWKRK. The FBA domain occupies 78–259; sequence FYFLRSLHRN…VTNSSIVVSP (182 aa). Position 258 is a phosphoserine (serine 258). The segment covering 261–271 has biased composition (polar residues); that stretch reads MTRNQASSEAQ. Positions 261–285 are disordered; that stretch reads MTRNQASSEAQPGQKHGQEEAAQSP. Phosphoserine is present on serine 284.

Interacts with VCP. Part of a SCF (SKP1-cullin-F-box) protein ligase complex. Interacts with CHEK1 and CUL1.

The protein resides in the cytoplasm. Its pathway is protein modification; protein ubiquitination. In terms of biological role, substrate-recognition component of some SCF (SKP1-CUL1-F-box protein)-type E3 ubiquitin ligase complexes. Involved in endoplasmic reticulum-associated degradation pathway (ERAD) for misfolded lumenal proteins by recognizing and binding sugar chains on unfolded glycoproteins that are retrotranslocated into the cytosol and promoting their ubiquitination and subsequent degradation. Able to recognize and bind denatured glycoproteins, which are modified with not only high-mannose but also complex-type oligosaccharides. Also recognizes sulfated glycans. Also involved in DNA damage response by specifically recognizing activated CHEK1 (phosphorylated on 'Ser-345'), promoting its ubiquitination and degradation. Ubiquitination of CHEK1 is required to ensure that activated CHEK1 does not accumulate as cells progress through S phase, or when replication forks encounter transient impediments during normal DNA replication. The sequence is that of F-box only protein 6 (FBXO6) from Homo sapiens (Human).